Reading from the N-terminus, the 371-residue chain is uncharacterized protein (371 aa).

Residues 339–371 are disordered; that stretch reads KVTHEDLVKNRPRSPVRPPIPATAKTPDLPERH.

This is an uncharacterized protein from Escherichia coli (strain K12).